Here is a 310-residue protein sequence, read N- to C-terminus: Upstream stimulatory factor 1 (310 aa).

Residues 1–17 (MKGQQKTAETEEGTVQI) are compositionally biased toward polar residues. Disordered stretches follow at residues 1 to 26 (MKGQ…ATGE) and 171 to 209 (QGGS…EVER). Over residues 190-209 (EAPRTTRDEKRRAQHNEVER) the composition is skewed to basic and acidic residues. One can recognise a bHLH domain in the interval 199-254 (KRRAQHNEVERRRRDKINNWIVQLSKIIPDCSMESTKSGQSKGGILSKACDYIQEL). Residues 271–292 (LQLDNDVLRQQVEDLKNKNLLL) are leucine-zipper. Lys306 participates in a covalent cross-link: Glycyl lysine isopeptide (Lys-Gly) (interchain with G-Cter in SUMO2).

As to quaternary structure, efficient DNA binding requires dimerization with another bHLH protein. Binds DNA as a homodimer or a heterodimer (USF1/USF2).

Its subcellular location is the nucleus. Functionally, transcription factor that binds to a symmetrical DNA sequence (E-boxes) (5'-CACGTG-3') that is found in a variety of viral and cellular promoters. The chain is Upstream stimulatory factor 1 (Usf1) from Mus musculus (Mouse).